Consider the following 668-residue polypeptide: Fe(2+) transporter FeoB (668 aa).

Positions 3 to 165 (SYEIALIGNP…KKAISIAVKD (163 aa)) constitute a FeoB-type G domain. Residue 10 to 17 (GNPNVGKS) participates in GTP binding. Mg(2+) is bound by residues Asn-21, Ala-22, Thr-24, and Gly-25. Residues 35–39 (GVTVE), 56–59 (DLPG), 116–119 (NKMD), and 145–147 (SAA) each bind GTP. The next 8 membrane-spanning stretches (helical) occupy residues 344-364 (VGAV…ISFL), 386-406 (LPGK…PAIM), 418-438 (ILTI…IYAL), 450-470 (VVIL…AFLF), 515-535 (IIVF…SGYL), 574-594 (ALVF…MLYG), 613-633 (AYAF…LAVI), and 643-663 (LFAV…ISVI).

It belongs to the TRAFAC class TrmE-Era-EngA-EngB-Septin-like GTPase superfamily. FeoB GTPase (TC 9.A.8) family. In terms of assembly, the crystallized N-terminal domain is a homodimer.

It localises to the cell membrane. In terms of biological role, probable transporter of a GTP-driven Fe(2+) uptake system, might be able to transport Fe(2+) into or out of the cell. This chain is Fe(2+) transporter FeoB, found in Methanocaldococcus jannaschii (strain ATCC 43067 / DSM 2661 / JAL-1 / JCM 10045 / NBRC 100440) (Methanococcus jannaschii).